The primary structure comprises 52 residues: UPF0391 membrane protein Avin_10980 (52 aa).

2 helical membrane passes run 4-24 (WSII…GGIA) and 29-49 (GIAK…LLFG).

It belongs to the UPF0391 family.

It localises to the cell membrane. The chain is UPF0391 membrane protein Avin_10980 from Azotobacter vinelandii (strain DJ / ATCC BAA-1303).